We begin with the raw amino-acid sequence, 313 residues long: Ribosomal RNA small subunit methyltransferase H (313 aa).

S-adenosyl-L-methionine-binding positions include 51-53 (GGH), aspartate 71, phenylalanine 98, aspartate 119, and glutamine 126. The disordered stretch occupies residues 293–313 (EEQRANPRSRSARLRVAERVS).

This sequence belongs to the methyltransferase superfamily. RsmH family.

It localises to the cytoplasm. It catalyses the reaction cytidine(1402) in 16S rRNA + S-adenosyl-L-methionine = N(4)-methylcytidine(1402) in 16S rRNA + S-adenosyl-L-homocysteine + H(+). Its function is as follows. Specifically methylates the N4 position of cytidine in position 1402 (C1402) of 16S rRNA. This Roseiflexus sp. (strain RS-1) protein is Ribosomal RNA small subunit methyltransferase H.